The chain runs to 896 residues: NET1-associated nuclear protein 1 (896 aa).

WD repeat units follow at residues 295–334 (WHID…QQFL), 490–542 (LQDP…TNWN), 552–595 (GISV…SNWC), and 605–645 (NHFS…ESLE).

As to quaternary structure, interacts with snoRNA U3. Interacts with MPP10. Component of the ribosomal small subunit (SSU) processome composed of at least 40 protein subunits and snoRNA U3. In the absence of snoRNA3, forms a complex with other t-UTPs. This complex can associate with pre-18S ribosomal RNAs.

Its subcellular location is the nucleus. The protein resides in the nucleolus. Involved in nucleolar processing of pre-18S ribosomal RNA. Required for optimal pre-ribosomal RNA transcription by RNA polymerase I together with a subset of U3 proteins required for transcription (t-UTPs). The protein is NET1-associated nuclear protein 1 (NAN1) of Saccharomyces cerevisiae (strain ATCC 204508 / S288c) (Baker's yeast).